The chain runs to 298 residues: ATP synthase gamma chain (298 aa).

The protein belongs to the ATPase gamma chain family. In terms of assembly, F-type ATPases have 2 components, CF(1) - the catalytic core - and CF(0) - the membrane proton channel. CF(1) has five subunits: alpha(3), beta(3), gamma(1), delta(1), epsilon(1). CF(0) has three main subunits: a, b and c.

It localises to the cell inner membrane. Its function is as follows. Produces ATP from ADP in the presence of a proton gradient across the membrane. The gamma chain is believed to be important in regulating ATPase activity and the flow of protons through the CF(0) complex. This is ATP synthase gamma chain from Francisella tularensis subsp. tularensis (strain WY96-3418).